The sequence spans 294 residues: Peroxidase-like protein 3 (294 aa).

An N-linked (GlcNAc...) asparagine glycan is attached at asparagine 129.

Belongs to the peroxidase family. As to expression, component of the acid-insoluble and acid-soluble organic matrix of calcified layers of the shell (at protein level).

Its subcellular location is the secreted. The sequence is that of Peroxidase-like protein 3 from Lottia gigantea (Giant owl limpet).